A 532-amino-acid polypeptide reads, in one-letter code: MSSTVSYWIFNSARNRIALLRGGRRLYSRAATSRNLLKWRPFSPALASSALKCGSPPGGFALRKAYRHTSTEEEDFHLQLSPEQVSDLLRAGESSHKVLDFNNGVPNSVLRFESNQLAANSPVEDRQGVATCVQTNGMMFGIFDGHGGHACAQAVSERLFYYMAVSLMSHQTLEQMEEATENMKPLLPILRWLKHPGDSIYKDVTSVHLDHLRVYWQELLDLHMEMGLSIEEALMYSFQRLDSDISLEIQAPLEDEVTRNLSLQVAFSGATACMAHVNGVHLHVANAGDCRAILGVQEENGAWSCLPLTCDHNAWNEAELSRLKREHPESEDRTLIIDDRLLGVLMPCRAFGDVQLKWSKELQRNVLARGFDTEALNIYQFTPPHYYTPPYLTAKPEVTYHRLRRQDKFLVLASDGLWDMLGNEDVVRLVVGHLSKVGRHKPDLDQRPANLGLMQSLLLQRKASGLHAADQNTATHLIRHAIGSNEYGEMEPERLAAMLTLPEDVARMYRDDITVMVVFFNSDSIDTYCKEG.

The N-terminal 69 residues, 1–69, are a transit peptide targeting the mitochondrion; that stretch reads MSSTVSYWIF…FALRKAYRHT (69 aa). In terms of domain architecture, PPM-type phosphatase spans 107–518; that stretch reads NSVLRFESNQ…YRDDITVMVV (412 aa). Mn(2+) contacts are provided by Asp-144, Gly-145, Asp-415, and Asp-511.

It belongs to the PP2C family. The cofactor is Mg(2+).

The protein resides in the mitochondrion. The catalysed reaction is O-phospho-L-seryl-[pyruvate dehydrogenase E1 alpha subunit] + H2O = L-seryl-[pyruvate dehydrogenase E1 alpha subunit] + phosphate. Its function is as follows. Mitochondrial enzyme that catalyzes the dephosphorylation and concomitant reactivation of the alpha subunit of the E1 component of the pyruvate dehydrogenase complex (PDC), thereby stimulating the conversion of pyruvate into acetyl-CoA. Acts as a crucial regulator of T cell metabolism and function, with a particular focus on T-helper Th17. This Mus musculus (Mouse) protein is [Pyruvate dehydrogenase [acetyl-transferring]]-phosphatase 2, mitochondrial (Pdp2).